A 686-amino-acid polypeptide reads, in one-letter code: Methionine--tRNA ligase (686 aa).

The short motif at 15-25 (PYANGPIHLGH) is the 'HIGH' region element. Zn(2+)-binding residues include C146, C149, C159, and C162. The 'KMSKS' region signature appears at 332–336 (KMSKS). K335 lines the ATP pocket. Positions 585 to 686 (TFAKTDLRVA…DGAKPGQRIM (102 aa)) constitute a tRNA-binding domain.

The protein belongs to the class-I aminoacyl-tRNA synthetase family. MetG type 1 subfamily. Homodimer. The cofactor is Zn(2+).

The protein resides in the cytoplasm. It carries out the reaction tRNA(Met) + L-methionine + ATP = L-methionyl-tRNA(Met) + AMP + diphosphate. Its function is as follows. Is required not only for elongation of protein synthesis but also for the initiation of all mRNA translation through initiator tRNA(fMet) aminoacylation. This Psychromonas ingrahamii (strain DSM 17664 / CCUG 51855 / 37) protein is Methionine--tRNA ligase.